A 492-amino-acid chain; its full sequence is Peptidyl-prolyl cis-trans isomerase-like 4 (492 aa).

Residues 1–161 form the PPIase cyclophilin-type domain; sequence MAVLLETTLG…QDIRINHTVI (161 aa). Residues 167 to 188 form a disordered region; the sequence is DDPPDLLIPDRSPEPTKEQLDS. Basic and acidic residues predominate over residues 177 to 187; sequence RSPEPTKEQLD. At S178 the chain carries Phosphoserine. T182 carries the post-translational modification Phosphothreonine. Glycyl lysine isopeptide (Lys-Gly) (interchain with G-Cter in SUMO2) cross-links involve residues K201, K212, and K218. An RRM domain is found at 240–318; the sequence is NVLFVCKLNP…RRIHVDFSQS (79 aa). Glycyl lysine isopeptide (Lys-Gly) (interchain with G-Cter in SUMO2) cross-links involve residues K321 and K362. 2 disordered regions span residues 368–409 and 423–492; these read DEQG…NPNQ and EESC…SKYR. Basic residues predominate over residues 377 to 390; it reads SHSHTSKKHKKKTR. S393 bears the Phosphoserine mark. Residue K405 forms a Glycyl lysine isopeptide (Lys-Gly) (interchain with G-Cter in SUMO2) linkage. A compositionally biased stretch (basic and acidic residues) spans 426 to 436; it reads CWEKQKNEKRD. A Glycyl lysine isopeptide (Lys-Gly) (interchain with G-Cter in SUMO2) cross-link involves residue K460. S471 is modified (phosphoserine). A compositionally biased stretch (basic residues) spans 473-485; the sequence is KRDRSRSPKKSKA.

This sequence belongs to the cyclophilin-type PPIase family. PPIL4 subfamily.

Its subcellular location is the nucleus. The enzyme catalyses [protein]-peptidylproline (omega=180) = [protein]-peptidylproline (omega=0). Functionally, PPIases accelerate the folding of proteins. It catalyzes the cis-trans isomerization of proline imidic peptide bonds in oligopeptides. This Mus musculus (Mouse) protein is Peptidyl-prolyl cis-trans isomerase-like 4 (Ppil4).